Reading from the N-terminus, the 1418-residue chain is Protein ced-11 (1418 aa).

A run of 7 helical transmembrane segments spans residues 617–637, 755–775, 782–802, 818–838, 856–876, 898–918, and 986–1006; these read FPIF…IIPV, YWLS…SVVL, LWDT…CFVL, VFDV…KVFP, VVSA…YIPL, FLFM…AVVF, and IVIE…FAFF.

It localises to the membrane. Plays a major role in programmed cell death. In Caenorhabditis elegans, this protein is Protein ced-11 (ced-11).